Consider the following 108-residue polypeptide: Tetrahydromethanopterin S-methyltransferase subunit B (108 aa).

A helical transmembrane segment spans residues 81–101 (FFGFWISLSILTLGLILVIGL).

It belongs to the MtrB family. As to quaternary structure, the complex is composed of 8 subunits; MtrA, MtrB, MtrC, MtrD, MtrE, MtrF, MtrG and MtrH.

It is found in the cell membrane. It carries out the reaction 5-methyl-5,6,7,8-tetrahydromethanopterin + coenzyme M + 2 Na(+)(in) = 5,6,7,8-tetrahydromethanopterin + methyl-coenzyme M + 2 Na(+)(out). Its pathway is one-carbon metabolism; methanogenesis from CO(2); methyl-coenzyme M from 5,10-methylene-5,6,7,8-tetrahydromethanopterin: step 2/2. Part of a complex that catalyzes the formation of methyl-coenzyme M and tetrahydromethanopterin from coenzyme M and methyl-tetrahydromethanopterin. This is an energy-conserving, sodium-ion translocating step. The polypeptide is Tetrahydromethanopterin S-methyltransferase subunit B (Methanococcus aeolicus (strain ATCC BAA-1280 / DSM 17508 / OCM 812 / Nankai-3)).